A 107-amino-acid polypeptide reads, in one-letter code: Nucleoid-associated protein GOX0603 (107 aa).

The protein belongs to the YbaB/EbfC family. Homodimer.

The protein localises to the cytoplasm. It is found in the nucleoid. Binds to DNA and alters its conformation. May be involved in regulation of gene expression, nucleoid organization and DNA protection. The polypeptide is Nucleoid-associated protein GOX0603 (Gluconobacter oxydans (strain 621H) (Gluconobacter suboxydans)).